The following is a 374-amino-acid chain: MDSRRMSRPRQIKFEEGWSNIQKGITKLIRILEGEPEPTFYFSECFKLYTIIYDMCVQRSDYSQQLYEKYRKVIEDYTIQTVLPSLREKHDEDMLRELVKRWNNHKIMVKWLSKFFVYIDRHLVRRSKIPIPSLDEVGLTCFLDLVYCEMQSTAKEVVIALIHKEREGEQIDRALVKNVLDIYVENGMGTLEKYEEDFESFMLQDTASYYSRKASRWTEEDSCPDYMIKVEECLKMERERVTHYLHSITEPKLVEKIQNELLVMVTKNRLENEHSGFSALLRDDKKNDLSRIYRLYLPIPKRLGRVADLFKKHITEEGNALIKQADDKTTNQLLIELHNKFIVYVIECFQNHTLFHKVRVLFMCVYLFQQYYIE.

The protein belongs to the cullin family.

The protein is Putative cullin-like protein 2 of Arabidopsis thaliana (Mouse-ear cress).